A 160-amino-acid polypeptide reads, in one-letter code: tRNA (cytidine(56)-2'-O)-methyltransferase (160 aa).

S-adenosyl-L-methionine-binding positions include leucine 68, 94 to 98 (GAEKV), and 112 to 119 (IGNQPHSE).

Belongs to the aTrm56 family. As to quaternary structure, homodimer.

Its subcellular location is the cytoplasm. The catalysed reaction is cytidine(56) in tRNA + S-adenosyl-L-methionine = 2'-O-methylcytidine(56) in tRNA + S-adenosyl-L-homocysteine + H(+). In terms of biological role, specifically catalyzes the AdoMet-dependent 2'-O-ribose methylation of cytidine at position 56 in tRNAs. This chain is tRNA (cytidine(56)-2'-O)-methyltransferase, found in Saccharolobus solfataricus (strain ATCC 35092 / DSM 1617 / JCM 11322 / P2) (Sulfolobus solfataricus).